Reading from the N-terminus, the 147-residue chain is Hemoglobin subunit beta-2 (147 aa).

One can recognise a Globin domain in the interval 3–147; it reads EWTDEERTII…VVSALGRQYH (145 aa). 2 residues coordinate heme b: H64 and H93.

It belongs to the globin family. Hb 2 is a heterotetramer of two alpha-2 and two beta-2 chains. Hb 3 is a heterotetramer of two alpha-1 and two beta-2 chains. Red blood cells.

Its function is as follows. Involved in oxygen transport from gills to the various peripheral tissues. The sequence is that of Hemoglobin subunit beta-2 (hbb2) from Gadus morhua (Atlantic cod).